The following is a 624-amino-acid chain: Chaperone protein HtpG (624 aa).

The tract at residues 1–336 (MKGQETRGFQ…SNDLPLNVSR (336 aa)) is a; substrate-binding. Residues 337–552 (EILQDSTVTR…ADEMSTQMAK (216 aa)) form a b region. The segment at 553 to 624 (LFAAAGQAVP…IRRMNQLLVS (72 aa)) is c.

This sequence belongs to the heat shock protein 90 family. Homodimer.

It is found in the cytoplasm. Its function is as follows. Molecular chaperone. Has ATPase activity. This chain is Chaperone protein HtpG, found in Citrobacter koseri (strain ATCC BAA-895 / CDC 4225-83 / SGSC4696).